The chain runs to 155 residues: Large ribosomal subunit protein uL13 (155 aa).

It belongs to the universal ribosomal protein uL13 family. As to quaternary structure, part of the 50S ribosomal subunit.

This protein is one of the early assembly proteins of the 50S ribosomal subunit, although it is not seen to bind rRNA by itself. It is important during the early stages of 50S assembly. This is Large ribosomal subunit protein uL13 from Rickettsia rickettsii (strain Iowa).